The following is a 558-amino-acid chain: S-layer protein (558 aa).

Residues 1 to 28 (MAMSLKKIGAIAVGGAMVATALASGVAA) form the signal peptide. 7 N-linked (GlcNAc...) asparagine glycosylation sites follow: Asn-112, Asn-138, Asn-158, Asn-197, Asn-226, Asn-291, and Asn-374.

It belongs to the Mj S-layer protein family.

Its subcellular location is the secreted. The protein resides in the cell wall. It localises to the S-layer. Its function is as follows. S-layer protein. The S-layer is a paracrystalline mono-layered assembly of proteins which coat the surface of the cell. The polypeptide is S-layer protein (sla) (Methanocaldococcus jannaschii (strain ATCC 43067 / DSM 2661 / JAL-1 / JCM 10045 / NBRC 100440) (Methanococcus jannaschii)).